The chain runs to 192 residues: PBAN-type neuropeptides (192 aa).

Positions Met1 to Cys23 are cleaved as a signal peptide. Position 47 is a leucine amide (Leu47). Residues Ser51–Thr94 constitute a propeptide that is removed on maturation. A leucine amide mark is found at Leu103, Leu122, Leu158, and Leu168. Residues Glu171–Asn192 constitute a propeptide that is removed on maturation.

This sequence belongs to the pyrokinin family. In terms of tissue distribution, expression is restricted to the subesophageal ganglion.

It localises to the secreted. Its function is as follows. A hormone that controls sex pheromone production in females and pheromone responsiveness in male. Also mediates visceral muscle contractile activity (myotropic activity). Identical to MRCH which is implicated in the formation of both melanin in the cuticle and ommochrome in the epidermis of armyworm species. Functionally, diapause hormone (DH) is responsible for induction of embryonic diapause. The three SGNPS are far less active than DH in inducing diapause eggs. Beta-SGNP expressed higher pban activity than PBAN-I, but alpha- and gamma-SGNP were far less active in pheromonotropic activity. The chain is PBAN-type neuropeptides from Bombyx mori (Silk moth).